The sequence spans 685 residues: Cilia- and flagella-associated protein 36 (685 aa).

The interval 1 to 20 (MLRRFSKKNKNPEGGSDDAS) is disordered. The stretch at 197–242 (SEELEMMAQNSRIQREALEQEIRKEEILLQQALDEGARAQNQNQNQ) forms a coiled coil. The span at 287–310 (TGTMTSSTGVSVGTLTNTGVSSGT) shows a compositional bias: low complexity. The segment at 287-573 (TGTMTSSTGV…LRGNKYDGDV (287 aa)) is disordered. The segment covering 363–372 (EAEKSKRERP) has biased composition (basic and acidic residues). Polar residues predominate over residues 410 to 434 (GTTSKKSIATVTASPEMSSKTTQME). 2 stretches are compositionally biased toward basic and acidic residues: residues 439–456 (GEGK…ERKY) and 508–557 (HEPR…ESKP).

The protein belongs to the CFAP36 family. In terms of tissue distribution, expressed in amphid and phasmid ciliated neurons.

It is found in the cell projection. The protein resides in the cilium. The protein localises to the cytoplasm. It localises to the cytoskeleton. Its subcellular location is the cilium axoneme. This is Cilia- and flagella-associated protein 36 from Caenorhabditis elegans.